Consider the following 255-residue polypeptide: 5'-nucleotidase SurE (255 aa).

Residues Asp8, Asp9, Ser40, and Asn93 each coordinate a divalent metal cation.

It belongs to the SurE nucleotidase family. It depends on a divalent metal cation as a cofactor.

The protein resides in the cytoplasm. The enzyme catalyses a ribonucleoside 5'-phosphate + H2O = a ribonucleoside + phosphate. Functionally, nucleotidase that shows phosphatase activity on nucleoside 5'-monophosphates. This is 5'-nucleotidase SurE from Rhodopseudomonas palustris (strain BisB18).